Here is a 591-residue protein sequence, read N- to C-terminus: Maintenance of mitochondrial morphology protein 1 (591 aa).

Over 1 to 83 (MGFNIPWNGT…AQPSLSFTQG (83 aa)) the chain is Lumenal. Residues 84–104 (LLVGQLSVVLLIGAFIKFFIF) form a helical membrane-spanning segment. At 105–591 (GEAPPPPSRS…GSMPDSVAVT (487 aa)) the chain is on the cytoplasmic side. Disordered regions lie at residues 138–159 (PRTL…SSST), 170–189 (YSAT…VHHS), 334–398 (PGTS…KHAH), and 479–591 (EAEA…VAVT). 2 stretches are compositionally biased toward polar residues: residues 146 to 159 (STSN…SSST) and 170 to 179 (YSATPTNPTS). Residues 180–189 (KHGRSRVHHS) show a composition bias toward basic residues. In terms of domain architecture, SMP-LTD spans 192–462 (QPESLDWFNV…EPRVQVVGLP (271 aa)). Polar residues predominate over residues 336–371 (TSDQTMGPSASPPNQSTSTETASINDQTSEGQSTQR). The span at 379–389 (PTNSTPTAATA) shows a compositional bias: low complexity. Composition is skewed to gly residues over residues 496–525 (TAGG…GMGY) and 536–550 (GDGG…GAGG). The segment covering 563–578 (GGDDGEGPGRRSDERF) has biased composition (basic and acidic residues).

This sequence belongs to the MMM1 family. Homodimer. Component of the ER-mitochondria encounter structure (ERMES) or MDM complex, composed of MMM1, MDM10, MDM12 and MDM34. An MMM1 homodimer associates with one molecule of MDM12 on each side in a pairwise head-to-tail manner, and the SMP-LTD domains of MMM1 and MDM12 generate a continuous hydrophobic tunnel for phospholipid trafficking.

It localises to the endoplasmic reticulum membrane. In terms of biological role, component of the ERMES/MDM complex, which serves as a molecular tether to connect the endoplasmic reticulum (ER) and mitochondria. Components of this complex are involved in the control of mitochondrial shape and protein biogenesis, and function in nonvesicular lipid trafficking between the ER and mitochondria. The MDM12-MMM1 subcomplex functions in the major beta-barrel assembly pathway that is responsible for biogenesis of all outer membrane beta-barrel proteins, and acts in a late step after the SAM complex. The MDM10-MDM12-MMM1 subcomplex further acts in the TOM40-specific pathway after the action of the MDM12-MMM1 complex. Essential for establishing and maintaining the structure of mitochondria and maintenance of mtDNA nucleoids. This Ajellomyces capsulatus (strain G186AR / H82 / ATCC MYA-2454 / RMSCC 2432) (Darling's disease fungus) protein is Maintenance of mitochondrial morphology protein 1.